The chain runs to 322 residues: uncharacterized protein (322 aa).

The N-terminal stretch at 1 to 32 (MRDGIGKRAASALFLCGVLVMLAVSSAIVSSA) is a signal peptide.

This is an uncharacterized protein from Bacillus subtilis (strain 168).